Consider the following 284-residue polypeptide: Hypoxanthine-guanine phosphoribosyltransferase (284 aa).

Residues K129, 194 to 202 (EDIIDTGKT), K226, and D253 each bind GMP. D198 serves as the catalytic Proton acceptor. Position 253 (D253) interacts with Mg(2+).

The protein belongs to the purine/pyrimidine phosphoribosyltransferase family. In terms of assembly, homotetramer. It depends on Mg(2+) as a cofactor.

The protein resides in the cytoplasm. It carries out the reaction IMP + diphosphate = hypoxanthine + 5-phospho-alpha-D-ribose 1-diphosphate. The enzyme catalyses GMP + diphosphate = guanine + 5-phospho-alpha-D-ribose 1-diphosphate. The protein operates within purine metabolism; IMP biosynthesis via salvage pathway; IMP from hypoxanthine: step 1/1. Converts guanine to guanosine monophosphate, and hypoxanthine to inosine monophosphate. Transfers the 5-phosphoribosyl group from 5-phosphoribosylpyrophosphate onto the purine. Plays a central role in the generation of purine nucleotides through the purine salvage pathway. This chain is Hypoxanthine-guanine phosphoribosyltransferase (HGPRT), found in Schistosoma mansoni (Blood fluke).